We begin with the raw amino-acid sequence, 446 residues long: tRNA modification GTPase MnmE (446 aa).

3 residues coordinate (6S)-5-formyl-5,6,7,8-tetrahydrofolate: Arg-24, Glu-81, and Lys-120. Positions 216 to 368 (GLHAVLIGPP…LHIRLRELAL (153 aa)) constitute a TrmE-type G domain. Asn-226 is a binding site for K(+). Residues 226–231 (NAGKSS), 245–251 (TDVAGTT), and 270–273 (DTAG) each bind GTP. Mg(2+) is bound at residue Ser-230. Thr-245, Val-247, and Thr-250 together coordinate K(+). Position 251 (Thr-251) interacts with Mg(2+). (6S)-5-formyl-5,6,7,8-tetrahydrofolate is bound at residue Lys-446.

Belongs to the TRAFAC class TrmE-Era-EngA-EngB-Septin-like GTPase superfamily. TrmE GTPase family. In terms of assembly, homodimer. Heterotetramer of two MnmE and two MnmG subunits. K(+) serves as cofactor.

Its subcellular location is the cytoplasm. Exhibits a very high intrinsic GTPase hydrolysis rate. Involved in the addition of a carboxymethylaminomethyl (cmnm) group at the wobble position (U34) of certain tRNAs, forming tRNA-cmnm(5)s(2)U34. The sequence is that of tRNA modification GTPase MnmE from Xanthomonas oryzae pv. oryzae (strain PXO99A).